Consider the following 179-residue polypeptide: Cell division protein SepF (179 aa).

The segment at 22–53 is disordered; that stretch reads LPYEKRDEPVFTPVNSSQEPALPMNQPSQSVG. The segment covering 34–53 has biased composition (polar residues); that stretch reads PVNSSQEPALPMNQPSQSVG.

It belongs to the SepF family. In terms of assembly, homodimer. Interacts with FtsZ.

It is found in the cytoplasm. Functionally, cell division protein that is part of the divisome complex and is recruited early to the Z-ring. Probably stimulates Z-ring formation, perhaps through the cross-linking of FtsZ protofilaments. Its function overlaps with FtsA. In Streptococcus pneumoniae (strain P1031), this protein is Cell division protein SepF.